We begin with the raw amino-acid sequence, 322 residues long: ATP-dependent 6-phosphofructokinase 1 (322 aa).

Residue Gly-11 coordinates ATP. An ADP-binding site is contributed by Arg-21 to Arg-25. Residues Arg-72–Ser-73 and Gly-102–Thr-105 each bind ATP. Asp-103 serves as a coordination point for Mg(2+). Position 126–128 (Thr-126–Asp-128) interacts with substrate. The active-site Proton acceptor is Asp-128. Arg-155 provides a ligand contact to ADP. Substrate is bound by residues Arg-163 and Met-170–Arg-172. Residues Gly-186 to Glu-188, Arg-212, and Lys-214 to Ser-216 contribute to the ADP site. Residues Glu-223, Arg-246, and His-252–Arg-255 each bind substrate.

It belongs to the phosphofructokinase type A (PFKA) family. ATP-dependent PFK group I subfamily. Prokaryotic clade 'B1' sub-subfamily. Homotetramer. Requires Mg(2+) as cofactor.

The protein localises to the cytoplasm. It carries out the reaction beta-D-fructose 6-phosphate + ATP = beta-D-fructose 1,6-bisphosphate + ADP + H(+). Its pathway is carbohydrate degradation; glycolysis; D-glyceraldehyde 3-phosphate and glycerone phosphate from D-glucose: step 3/4. Allosterically activated by ADP and other diphosphonucleosides. Allosterically inhibited by phosphoenolpyruvate which induces the dissociation of the active tetramer into an inactive two-subunit forms. In terms of biological role, catalyzes the phosphorylation of D-fructose 6-phosphate to fructose 1,6-bisphosphate by ATP, the first committing step of glycolysis. This Thermus thermophilus (strain ATCC 27634 / DSM 579 / HB8) protein is ATP-dependent 6-phosphofructokinase 1.